Here is a 326-residue protein sequence, read N- to C-terminus: mRNA decay activator protein ZFP36 (326 aa).

Positions 1–15 (MDLTAIYESLLSLSP) are necessary for nuclear export. The necessary and sufficient for the association with mRNA decay enzymes and mRNA decay activation stretch occupies residues 1 to 100 (MDLTAIYESL…PTSPTATSTT (100 aa)). Necessary for localization of ARE-containing mRNAs to processing bodies (PBs) regions lie at residues 1–174 (MDLT…DLAA) and 100–326 (TPSR…SVSE). The segment at 13 to 66 (LSPDVPVPSDHGGTESSPGWGSSGPWSLSPSDSSPSGVTSRLPGRSTSLVEGRS) is disordered. Low complexity predominate over residues 28–49 (SSPGWGSSGPWSLSPSDSSPSG). At Ser60 the chain carries Phosphoserine; by MAPKAPK2. At Ser66 the chain carries Phosphoserine. The P-P-P-P-G repeat unit spans residues 71 to 75 (PPPPG). Residues 78–102 (PLAPRLGPELSPSPTSPTATSTTPS) form a disordered region. 2 positions are modified to phosphoserine: Ser88 and Ser90. Thr92 carries the phosphothreonine modification. Ser93 is modified (phosphoserine). The necessary for nuclear localization stretch occupies residues 95–168 (TATSTTPSRY…GSRCHFIHNP (74 aa)). The necessary for RNA-binding stretch occupies residues 97 to 173 (TSTTPSRYKT…FIHNPSEDLA (77 aa)). C3H1-type zinc fingers lie at residues 103–131 (RYKTELCRTFSESGRCRYGAKCQFAHGLG) and 141–169 (KYKTELCHKFYLQGRCPYGSRCHFIHNPS). The necessary for interaction with PABPN1 stretch occupies residues 103–194 (RYKTELCRTF…ISFSGLPSGR (92 aa)). Phosphoserine is present on Ser169. The necessary for mRNA decay activation stretch occupies residues 174–326 (APGHPPVLRQ…PIFNRISVSE (153 aa)). 2 disordered regions span residues 175 to 245 (PGHP…RRDP) and 273 to 292 (SVQSLGSDPDEYASSGSSLG). Position 186 is a phosphoserine; by MAPKAPK2 (Ser186). At Ser197 the chain carries Phosphoserine. The stretch at 198–202 (PPPPG) is one P-P-P-P-G repeat. Positions 204-216 (AGPSLSSSSFSPS) are enriched in low complexity. At Ser218 the chain carries Phosphoserine. Residues 219–223 (PPPPG) form a P-P-P-P-G repeat. At Ser228 the chain carries Phosphoserine; by MAPK1; in vitro. Ser276, Ser296, and Ser323 each carry phosphoserine. An interaction with CNOT1 region spans residues 312–326 (APRRLPIFNRISVSE).

Associates with cytoplasmic CCR4-NOT and PAN2-PAN3 deadenylase complexes to trigger ARE-containing mRNA deadenylation and decay processes. Part of a mRNA decay activation complex at least composed of poly(A)-specific exoribonucleases CNOT6, EXOSC2 and XRN1 and mRNA-decapping enzymes DCP1A and DCP2. Associates with the RNA exosome complex. Interacts (via phosphorylated form) with 14-3-3 proteins; these interactions promote exclusion of ZFP36 from cytoplasmic stress granules in response to arsenite treatment in a MAPKAPK2-dependent manner and does not prevent CCR4-NOT deadenylase complex recruitment or ZFP36-induced ARE-containing mRNA deadenylation and decay processes. Interacts with 14-3-3 proteins; these interactions occur in response to rapamycin in an Akt-dependent manner. Interacts with AGO2 and AGO4. Interacts (via C-terminus) with CNOT1; this interaction occurs in a RNA-independent manner and induces mRNA deadenylation. Interacts (via N-terminus) with CNOT6. Interacts with CNOT6L. Interacts (via C-terminus) with CNOT7; this interaction occurs in a RNA-independent manner, induces mRNA deadenylation and is inhibited in a phosphorylation MAPKAPK2-dependent manner. Interacts (via unphosphorylated form) with CNOT8; this interaction occurs in a RNA-independent manner and is inhibited in a phosphorylation MAPKAPK2-dependent manner. Interacts with DCP1A. Interacts (via N-terminus) with DCP2. Interacts with EDC3. Interacts (via N-terminus) with EXOSC2. Interacts with heat shock 70 kDa proteins. Interacts with KHSRP; this interaction increases upon cytokine-induced treatment. Interacts with MAP3K4; this interaction enhances the association with SH3KBP1/CIN85. Interacts with MAPKAPK2; this interaction occurs upon skeletal muscle satellite cell activation. Interacts with NCL. Interacts with NUP214; this interaction increases upon lipopolysaccharide (LPS) stimulation. Interacts with PABPC1; this interaction occurs in a RNA-dependent manner. Interacts (via hypophosphorylated form) with PABPN1 (via RRM domain and C-terminal arginine-rich region); this interaction occurs in the nucleus in a RNA-independent manner, decreases in presence of single-stranded poly(A) RNA-oligomer and in a p38 MAPK-dependent-manner and inhibits nuclear poly(A) tail synthesis. Interacts with PAN2. Interacts (via C3H1-type zinc finger domains) with PKM. Interacts (via C3H1-type zinc finger domains) with nuclear RNA poly(A) polymerase. Interacts with PPP2CA; this interaction occurs in LPS-stimulated cells and induces ZFP36 dephosphorylation, and hence may promote ARE-containing mRNAs decay. Interacts (via C-terminus) with PRR5L (via C-terminus); this interaction may accelerate ZFP36-mediated mRNA decay during stress. Interacts (via C-terminus) with SFN; this interaction occurs in a phosphorylation-dependent manner. Interacts (via extreme C-terminal region) with SH3KBP1/CIN85 (via SH3 domains); this interaction enhances MAP3K4-induced phosphorylation of ZFP36 at Ser-66 and Ser-93 and does not alter neither ZFP36 binding to ARE-containing transcripts nor TNF-alpha mRNA decay. Interacts with XRN1. Interacts (via C-terminus and Ser-186 phosphorylated form) with YWHAB; this interaction occurs in a p38/MAPKAPK2-dependent manner, increases cytoplasmic localization of ZFP36 and protects ZFP36 from Ser-186 dephosphorylation by serine/threonine phosphatase 2A, and hence may be crucial for stabilizing ARE-containing mRNAs. Interacts (via phosphorylated form) with YWHAE. Interacts (via C-terminus) with YWHAG; this interaction occurs in a phosphorylation-dependent manner. Interacts with YWHAH; this interaction occurs in a phosphorylation-dependent manner. Interacts with YWHAQ; this interaction occurs in a phosphorylation-dependent manner. Interacts with (via C-terminus) YWHAZ; this interaction occurs in a phosphorylation-dependent manner. Interacts (via P-P-P-P-G repeats) with GIGYF2; the interaction is direct. In terms of assembly, (Microbial infection) Interacts (via C-terminus) with HTLV-1 TAX (via C-terminus); this interaction inhibits HTLV-1 TAX to transactivate viral long terminal repeat (LTR) promoter. In terms of processing, phosphorylated. Phosphorylation at serine and/or threonine residues occurs in a p38 MAPK- and MAPKAPK2-dependent manner. Phosphorylated by MAPKAPK2 at Ser-60 and Ser-186; phosphorylation increases its stability and cytoplasmic localization, promotes binding to 14-3-3 adapter proteins and inhibits the recruitment of cytoplasmic CCR4-NOT and PAN2-PAN3 deadenylase complexes to the mRNA decay machinery, thereby inhibiting ZFP36-induced ARE-containing mRNA deadenylation and decay processes. Phosphorylation by MAPKAPK2 does not impair ARE-containing RNA-binding. Phosphorylated in a MAPKAPK2- and p38 MAPK-dependent manner upon skeletal muscle satellite cell activation; this phosphorylation inhibits ZFP36-mediated mRNA decay activity, and hence stabilizes MYOD1 mRNA. Phosphorylated by MAPK1 upon mitogen stimulation. Phosphorylated at Ser-66 and Ser-93; these phosphorylations increase in a SH3KBP1-dependent manner. Phosphorylated at serine and threonine residues in a pyruvate kinase PKM- and p38 MAPK-dependent manner. Phosphorylation at Ser-60 may participate in the PKM-mediated degradation of ZFP36 in a p38 MAPK-dependent manner. Dephosphorylated by serine/threonine phosphatase 2A at Ser-186. Post-translationally, ubiquitinated; pyruvate kinase (PKM)-dependent ubiquitination leads to proteasomal degradation through a p38 MAPK signaling pathway. In terms of tissue distribution, expressed in both basal and suprabasal epidermal layers. Expressed in epidermal keratinocytes. Expressed strongly in mature dendritic cells. Expressed in immature dendritic cells (at protein level).

It is found in the nucleus. Its subcellular location is the cytoplasm. It localises to the cytoplasmic granule. The protein resides in the P-body. Its function is as follows. Zinc-finger RNA-binding protein that destabilizes several cytoplasmic AU-rich element (ARE)-containing mRNA transcripts by promoting their poly(A) tail removal or deadenylation, and hence provide a mechanism for attenuating protein synthesis. Acts as an 3'-untranslated region (UTR) ARE mRNA-binding adapter protein to communicate signaling events to the mRNA decay machinery. Recruits deadenylase CNOT7 (and probably the CCR4-NOT complex) via association with CNOT1, and hence promotes ARE-mediated mRNA deadenylation. Functions also by recruiting components of the cytoplasmic RNA decay machinery to the bound ARE-containing mRNAs. Self regulates by destabilizing its own mRNA. Binds to 3'-UTR ARE of numerous mRNAs and of its own mRNA. Plays a role in anti-inflammatory responses; suppresses tumor necrosis factor (TNF)-alpha production by stimulating ARE-mediated TNF-alpha mRNA decay and several other inflammatory ARE-containing mRNAs in interferon (IFN)- and/or lipopolysaccharide (LPS)-induced macrophages. Also plays a role in the regulation of dendritic cell maturation at the post-transcriptional level, and hence operates as part of a negative feedback loop to limit the inflammatory response. Promotes ARE-mediated mRNA decay of hypoxia-inducible factor HIF1A mRNA during the response of endothelial cells to hypoxia. Positively regulates early adipogenesis of preadipocytes by promoting ARE-mediated mRNA decay of immediate early genes (IEGs). Negatively regulates hematopoietic/erythroid cell differentiation by promoting ARE-mediated mRNA decay of the transcription factor STAT5B mRNA. Plays a role in maintaining skeletal muscle satellite cell quiescence by promoting ARE-mediated mRNA decay of the myogenic determination factor MYOD1 mRNA. Associates also with and regulates the expression of non-ARE-containing target mRNAs at the post-transcriptional level, such as MHC class I mRNAs. Participates in association with argonaute RISC catalytic components in the ARE-mediated mRNA decay mechanism; assists microRNA (miRNA) targeting ARE-containing mRNAs. May also play a role in the regulation of cytoplasmic mRNA decapping; enhances decapping of ARE-containing RNAs, in vitro. Involved in the delivery of target ARE-mRNAs to processing bodies (PBs). In addition to its cytosolic mRNA-decay function, affects nuclear pre-mRNA processing. Negatively regulates nuclear poly(A)-binding protein PABPN1-stimulated polyadenylation activity on ARE-containing pre-mRNA during LPS-stimulated macrophages. Also involved in the regulation of stress granule (SG) and P-body (PB) formation and fusion. Plays a role in the regulation of keratinocyte proliferation, differentiation and apoptosis. Plays a role as a tumor suppressor by inhibiting cell proliferation in breast cancer cells. Functionally, (Microbial infection) Negatively regulates HTLV-1 TAX-dependent transactivation of viral long terminal repeat (LTR) promoter. The sequence is that of mRNA decay activator protein ZFP36 from Homo sapiens (Human).